The following is a 131-amino-acid chain: Small ribosomal subunit protein uS9 (131 aa).

The protein belongs to the universal ribosomal protein uS9 family.

The polypeptide is Small ribosomal subunit protein uS9 (Glaesserella parasuis serovar 5 (strain SH0165) (Haemophilus parasuis)).